A 300-amino-acid polypeptide reads, in one-letter code: Ribosomal RNA small subunit methyltransferase H (300 aa).

S-adenosyl-L-methionine-binding positions include 33–35, D52, F86, D97, and Q104; that span reads AGH.

This sequence belongs to the methyltransferase superfamily. RsmH family.

Its subcellular location is the cytoplasm. It catalyses the reaction cytidine(1402) in 16S rRNA + S-adenosyl-L-methionine = N(4)-methylcytidine(1402) in 16S rRNA + S-adenosyl-L-homocysteine + H(+). Functionally, specifically methylates the N4 position of cytidine in position 1402 (C1402) of 16S rRNA. In Aliarcobacter butzleri (strain RM4018) (Arcobacter butzleri), this protein is Ribosomal RNA small subunit methyltransferase H.